We begin with the raw amino-acid sequence, 203 residues long: ATP-dependent Clp protease proteolytic subunit (203 aa).

The Nucleophile role is filled by Ser107. His132 is an active-site residue.

This sequence belongs to the peptidase S14 family. As to quaternary structure, fourteen ClpP subunits assemble into 2 heptameric rings which stack back to back to give a disk-like structure with a central cavity, resembling the structure of eukaryotic proteasomes.

It is found in the cytoplasm. The catalysed reaction is Hydrolysis of proteins to small peptides in the presence of ATP and magnesium. alpha-casein is the usual test substrate. In the absence of ATP, only oligopeptides shorter than five residues are hydrolyzed (such as succinyl-Leu-Tyr-|-NHMec, and Leu-Tyr-Leu-|-Tyr-Trp, in which cleavage of the -Tyr-|-Leu- and -Tyr-|-Trp bonds also occurs).. Cleaves peptides in various proteins in a process that requires ATP hydrolysis. Has a chymotrypsin-like activity. Plays a major role in the degradation of misfolded proteins. The polypeptide is ATP-dependent Clp protease proteolytic subunit (Shewanella piezotolerans (strain WP3 / JCM 13877)).